Reading from the N-terminus, the 437-residue chain is MTYLILLGASICLFPFWEVTMLTLAFIIPMSLTYLNINFTFSFSSELIWLTPIGTALIFLTLMVTLLVLIGTYNIKNYKYIGCLSSLNLVLMMAFCVCDFLTFYVMFEVSLIPTLLLILLWGYQPERMQAGFYLMLYTVTASLPLLLLLLYLYYTVGSLNFYIIMVYYSFNNNPLMLVGLMMAFLVKLPIYTCHLWLPKAHVEAPLGGSMVLAGVLLKLGGYGLYMLINFIISKSSSLVISVIITLSLWGAVIASIICIQQVDIKALVAYSSVAHMSLVSAGILMMSNWSYTCAKMTMIAHGYTSSALFVLANLSYLKIKSRSLMFMKGLLAIFPAMAFYWFLFSCMNMAAPPTLNFIGELLIIPSMYIASYMLLILMCIIMFISAGYSLYMYMTVNHGELGLYITPSIQLKNVDYHVLTAHLLPTFILLIPQLFSV.

13 helical membrane passes run 8-28 (GASI…AFII), 50-70 (LTPI…LVLI), 78-98 (YKYI…FCVC), 100-120 (FLTF…LILL), 132-152 (FYLM…LLYL), 177-197 (LVGL…HLWL), 212-232 (LAGV…NFII), 239-259 (VISV…IICI), 266-286 (ALVA…ILMM), 297-317 (TMIA…LSYL), 324-344 (LMFM…WFLF), 361-381 (LLII…MCII), and 417-437 (HVLT…LFSV).

This sequence belongs to the complex I subunit 4 family.

Its subcellular location is the mitochondrion membrane. It carries out the reaction a ubiquinone + NADH + 5 H(+)(in) = a ubiquinol + NAD(+) + 4 H(+)(out). Core subunit of the mitochondrial membrane respiratory chain NADH dehydrogenase (Complex I) that is believed to belong to the minimal assembly required for catalysis. Complex I functions in the transfer of electrons from NADH to the respiratory chain. The immediate electron acceptor for the enzyme is believed to be ubiquinone. The sequence is that of NADH-ubiquinone oxidoreductase chain 4 (ND4) from Albinaria caerulea (Land snail).